We begin with the raw amino-acid sequence, 512 residues long: Cytochrome P450 monooxygenase FrzL (512 aa).

Residues 6–26 traverse the membrane as a helical segment; it reads TMLAFVPYLAVFVACYGLVYY. Residue cysteine 423 participates in heme binding.

Belongs to the cytochrome P450 family. Heme is required as a cofactor.

The protein resides in the membrane. Its function is as follows. Cytochrome P450 monooxygenase; part of the gene cluster that mediates the biosynthesis of the alkaloid (-)-FR901483, a potent immunosuppressant that shows efficacy in animal models and a probable inhibitor of purine nucleotide biosynthesis by targeting phosphoribosylpyrophosphate amidotransferase (PPAT). The only unassigned enzyme in the cluster is the second cytochrome P450 monooxygenase FrzL. The biosynthesis of (-)-FR901483 starts with the condensation of two L-tyrosines to yield (S,S)-dityrosyl-piperazine. This process occurs in 3 steps with the non-canonical nonribosomal peptide synthetase FrzA catalyzing the reduction of L-tyrosine into L-tyrosinal, the spontaneous condensation of 2 L-tyrosinal units, and the subsequent reduction by the NmrA-like family domain-containing oxidoreductase FrzB. The cytochrome P450 monooxygenase FrzC then performs coupling between N10 and C1' to morph the piperazine into a 1,4-diazabicyclo[3.2.1]octane spiro-fused to a 2,5-cyclohexadienone. The dienone portion is further reduced to cyclohexanone by the flavin-dependent reductase FrzD. The methyltranserases (MTs) FrzE and FrzF are then involved in the methylation at the C10' amine and the C4 phenolic oxygen, respectively. The order of the two MTs appear to be interchangeable. Cleavage of the C9-N10' bond by the dioxygenase FrzG then leads to formation of a conjugated iminium. In addition to the oxidation of C9, an additional dehydrogenation between C7 and C8 can occur to give a likely shunt product. The next biosynthetic step is the intramolecular aldol condensation catalyzed by the newly identified aldolase FrzH to yield an aza-tricyclic product with the formation of a C9-C3' bond. The short-chain dehydrogenase/reductase FrzI then produces dephospho-(-)-FR901483 that is phosphorylated at C4'-OH into (-)-FR901483 by the phosphotransferase FrzJ. The sequence is that of Cytochrome P450 monooxygenase FrzL from Cladobotryum sp.